A 582-amino-acid polypeptide reads, in one-letter code: MAAFLHHCPFLKSMPKPALRRRVPALLSLADRCPVIVHQVCISRLHILETKLDVSPTQPKRQRLSLLDQKRLFAQTATQVAVSVSKGCPFVSSQIGMVRASPEVQEDVQADLKSPVLPTPPQTGITQLLKDNMVGPSFDYDNFFNEKIAEKKRDHTYRVFKTVNRNAVVFPFAEDYSVSDRQGSQVSVWCSNDYLGMSRHPRVLEAIREVLERHGAGAGGTRNISGTSKYHVTLEKELAHLHQKDAALVFSSCFVANDSTLFTLAKMLPGCHIYSDAGNHASMIQGIRNSGAKRFIFRHNDSRHLEELLQQSDPKTPKIVAFETVHSMDGAICPLEELCDVAHRHGALTFVDEVHAVGLYGAHGAGVGERDNVMHKIDIVSGTLGKAFGCVGGYVASSAALVDTVRSFAAGFIFTTSLPPMILAGALESVRVLKSPEGQLLRRAHQRNVKYMRQLLMDKGLPVVNCPSHIIPIRVGNAELNTKVCDSLLEKHNIYVQAINYPTVPRGQELLRLAPSPHHHPAMMEYFVDKLVEVWQEAGLLLNGPATVSCTFCDRPLHFDLMSEWEKSYFGNMEPQYITMSA.

R158 provides a ligand contact to succinyl-CoA. Pyridoxal 5'-phosphate is bound by residues C253 and F254. The succinyl-CoA site is built by S275 and R294. Pyridoxal 5'-phosphate-binding residues include S327, H355, and T383. K386 is a catalytic residue. K386 bears the N6-(pyridoxal phosphate)lysine mark. Positions 415 and 416 each coordinate pyridoxal 5'-phosphate. T503 lines the succinyl-CoA pocket.

This sequence belongs to the class-II pyridoxal-phosphate-dependent aminotransferase family. Homodimer. Requires pyridoxal 5'-phosphate as cofactor.

It localises to the mitochondrion inner membrane. The catalysed reaction is succinyl-CoA + glycine + H(+) = 5-aminolevulinate + CO2 + CoA. Its pathway is porphyrin-containing compound metabolism; protoporphyrin-IX biosynthesis; 5-aminolevulinate from glycine: step 1/1. Functionally, catalyzes the pyridoxal 5'-phosphate (PLP)-dependent condensation of succinyl-CoA and glycine to form aminolevulinic acid (ALA), with CoA and CO2 as by-products. Contributes significantly to heme formation during erythropoiesis. The sequence is that of 5-aminolevulinate synthase, erythroid-specific, mitochondrial (alas2) from Opsanus tau (Oyster toadfish).